We begin with the raw amino-acid sequence, 394 residues long: Nicotinate phosphoribosyltransferase (394 aa).

Histidine 218 is subject to Phosphohistidine; by autocatalysis.

This sequence belongs to the NAPRTase family. In terms of processing, transiently phosphorylated on a His residue during the reaction cycle. Phosphorylation strongly increases the affinity for substrates and increases the rate of nicotinate D-ribonucleotide production. Dephosphorylation regenerates the low-affinity form of the enzyme, leading to product release.

The catalysed reaction is nicotinate + 5-phospho-alpha-D-ribose 1-diphosphate + ATP + H2O = nicotinate beta-D-ribonucleotide + ADP + phosphate + diphosphate. It functions in the pathway cofactor biosynthesis; NAD(+) biosynthesis; nicotinate D-ribonucleotide from nicotinate: step 1/1. In terms of biological role, catalyzes the synthesis of beta-nicotinate D-ribonucleotide from nicotinate and 5-phospho-D-ribose 1-phosphate at the expense of ATP. This is Nicotinate phosphoribosyltransferase from Xylella fastidiosa (strain 9a5c).